Consider the following 718-residue polypeptide: Sodium/myo-inositol cotransporter (718 aa).

Over 1-9 the chain is Extracellular; it reads MRAVLETAD. A helical membrane pass occupies residues 10–29; that stretch reads IAIVALYFILVMCIGFFAMW. Residues 30 to 38 lie on the Cytoplasmic side of the membrane; it reads KSNRSTVSG. The helical transmembrane segment at 39-57 threads the bilayer; sequence YFLAGRSMTWVAIGASLFV. Over 58–86 the chain is Extracellular; it reads SNIGSEHFIGLAGSGAASGFAVGAWEFNA. A helical transmembrane segment spans residues 87-110; that stretch reads LLLLQLLGWVFIPIYIRSGVYTMP. The Cytoplasmic portion of the chain corresponds to 111–123; sequence EYLSKRFGGHRIQ. A helical transmembrane segment spans residues 124 to 144; the sequence is VYFAALSLILYIFTKLSVDLY. Residues 145–157 lie on the Extracellular side of the membrane; that stretch reads SGALFIQESLGWN. A helical transmembrane segment spans residues 158–183; that stretch reads LYVSVILLIGMTALLTVTGGLVAVIY. The Cytoplasmic segment spans residues 184-186; sequence TDT. Residues 187 to 205 form a helical membrane-spanning segment; sequence LQALLMIVGALTLMIISMM. At 206–303 the chain is on the extracellular side; the sequence is EIGGFEEVKR…HAKGSTLMAG (98 aa). Asn-232 carries an N-linked (GlcNAc...) asparagine glycan. A helical membrane pass occupies residues 304–324; that stretch reads FLKLLPMFIIVVPGMISRILF. Topologically, residues 325–353 are cytoplasmic; that stretch reads ADDIACINPEHCMQVCGSRAGCSNIAYPR. A helical transmembrane segment spans residues 354 to 376; the sequence is LVMKLVPVGLRGLMMAVMIAALM. At 377–406 the chain is on the extracellular side; that stretch reads SDLDSIFNSASTIFTLDVYKLIRRSASSRE. A helical transmembrane segment spans residues 407–430; sequence LMIVGRIFVAFMVVISIAWVPIIV. Residues 431 to 443 lie on the Cytoplasmic side of the membrane; it reads EMQGGQMYLYIQE. A helical membrane pass occupies residues 444–462; it reads VADYLTPPVAALFLLAIFW. Over 463 to 510 the chain is Extracellular; sequence KRCNEQGAFYGGMAGFVLGAVRLTLAFAYRAPECDQPDNRPGFIKDIH. A helical transmembrane segment spans residues 511–532; that stretch reads YMYVATALFWVTGLITVIVSLL. Topologically, residues 533–695 are cytoplasmic; sequence TPPPTKEQIR…QMLEEPPQVK (163 aa). Residues Ser-594 and Ser-632 each carry the phosphoserine modification. Residues 696–716 form a helical membrane-spanning segment; that stretch reads LILNIGLFAVCSLGIFMFVYF. Residues 717-718 are Extracellular-facing; it reads SL.

This sequence belongs to the sodium:solute symporter (SSF) (TC 2.A.21) family. As to quaternary structure, interacts with KCNQ2 (via the pore module). Interacts with KCNQ1; this interaction is direct. Forms coregulatory complexes with ion channels KCNQ2-KCNQ3 and KCNQ1-KCNE2. As to expression, kidney cortex and medulla.

It localises to the apical cell membrane. The protein localises to the basolateral cell membrane. The enzyme catalyses myo-inositol(out) + 2 Na(+)(out) = myo-inositol(in) + 2 Na(+)(in). The catalysed reaction is scyllo-inositol(out) + 2 Na(+)(out) = scyllo-inositol(in) + 2 Na(+)(in). With respect to regulation, inhibited by phlorizin and phloretin. In terms of biological role, electrogenic Na(+)-coupled sugar symporter that actively transports myo-inositol and its stereoisomer scyllo-inositol across the plasma membrane, with a Na(+) to sugar coupling ratio of 2:1. Maintains myo-inositol concentration gradient that defines cell volume and fluid balance during osmotic stress, in particular in the fetoplacental unit and central nervous system. Forms coregulatory complexes with voltage-gated K(+) ion channels, allosterically altering ion selectivity, voltage dependence and gating kinetics of the channel. In turn, K(+) efflux through the channel forms a local electrical gradient that modulates electrogenic Na(+)-coupled myo-inositol influx through the transporter. Associates with KCNQ1-KCNE2 channel in the apical membrane of choroid plexus epithelium and regulates the myo-inositol gradient between blood and cerebrospinal fluid with an impact on neuron excitability. Associates with KCNQ2-KCNQ3 channel altering ion selectivity, increasing Na(+) and Cs(+) permeation relative to K(+) permeation. Provides myo-inositol precursor for biosynthesis of phosphoinositides such as PI(4,5)P2, thus indirectly affecting the activity of phosphoinositide-dependent ion channels and Ca(2+) signaling upon osmotic stress. Has very low affinity for sugars such as L-fucose and L-xylose, with an affinity about three orders of magnitude lower than myo-inositol. The sequence is that of Sodium/myo-inositol cotransporter (SLC5A3) from Canis lupus familiaris (Dog).